Reading from the N-terminus, the 117-residue chain is Putative membrane protein insertion efficiency factor (117 aa).

It belongs to the UPF0161 family.

The protein resides in the cell inner membrane. Could be involved in insertion of integral membrane proteins into the membrane. This chain is Putative membrane protein insertion efficiency factor, found in Bartonella bacilliformis (strain ATCC 35685 / KC583 / Herrer 020/F12,63).